A 512-amino-acid polypeptide reads, in one-letter code: Sucrose transport protein SUC5 (512 aa).

The segment at 1-27 is disordered; it reads MGALEAERAANNATALETQSSPEDLGQ. Topologically, residues 1–33 are cytoplasmic; the sequence is MGALEAERAANNATALETQSSPEDLGQPSPLRK. The span at 11–22 shows a compositional bias: polar residues; sequence NNATALETQSSP. A Phosphoserine modification is found at S20. A helical transmembrane segment spans residues 34–54; that stretch reads IISVASIAAGVQFGWALQLSL. At 55–67 the chain is on the extracellular side; sequence LTPYIQLLGIPHK. The helical transmembrane segment at 68-88 threads the bilayer; that stretch reads WSSYMWLCGPISGMIVQPIVG. Residues 89–102 are Cytoplasmic-facing; that stretch reads YHSDRCESRFGRRR. Residues 103-123 traverse the membrane as a helical segment; that stretch reads PFIAAGVALVAVSVFLIGFAA. Residues 124–140 are Extracellular-facing; the sequence is DMGHSFGDKLENKVRTR. A helical transmembrane segment spans residues 141 to 161; sequence AIIIFLTGFWFLDVANNTLQG. Residues 162-179 lie on the Cytoplasmic side of the membrane; it reads PCRAFLADLAAGDAKKTR. A helical transmembrane segment spans residues 180 to 200; it reads VANACFSFFMAVGNVLGYAAG. Over 201–225 the chain is Extracellular; sequence SYTNLHKMFPFTMTKACDIYCANLK. A helical transmembrane segment spans residues 226 to 246; that stretch reads TCFFLSITLLLIVTFSSLWYV. Over 247-281 the chain is Cytoplasmic; sequence KDKQWSPPQGDKEEKTSSLFFFGEIFGAVRHMKRP. The helical transmembrane segment at 282–302 threads the bilayer; that stretch reads MVMLLIVTVINWIAWFPFILY. The Extracellular segment spans residues 303 to 333; the sequence is DTDWMGREVYGGNSDGDERSKKLYDQGVQAG. Residues 334–354 form a helical membrane-spanning segment; it reads ALGLMFNSILLGFVSLGVESI. The Cytoplasmic segment spans residues 355–363; the sequence is GRKMGGAKR. Residues 364 to 384 form a helical membrane-spanning segment; sequence LWGCVNFILAIGLAMTVLVTK. Topologically, residues 385–406 are extracellular; it reads SAEHHREIAGPLAGPSSGIKAG. A helical transmembrane segment spans residues 407–427; it reads VFSLFTVLGIPLAITYSIPFA. Residues 428-440 lie on the Cytoplasmic side of the membrane; sequence LASIFSTNSGAGQ. Residues 441–461 traverse the membrane as a helical segment; sequence GLSLGVLNIAICIPQMIVSFS. Topologically, residues 462-473 are extracellular; that stretch reads SGPLDAQFGGGN. The helical transmembrane segment at 474-494 threads the bilayer; sequence LPSFVVGAIAAAVSGVLALTV. The Cytoplasmic segment spans residues 495–512; it reads LPSPPPDAPAMSGAMGFH.

Belongs to the glycoside-pentoside-hexuronide (GPH) cation symporter transporter (TC 2.A.2.4) family. In terms of tissue distribution, widely expressed. Expressed in the endosperm and on the epidermis of the outer surface of the cotyledons of torpedo-stage or older embryos.

The protein resides in the cell membrane. The enzyme catalyses sucrose(out) + H(+)(out) = sucrose(in) + H(+)(in). It participates in glycan biosynthesis; sucrose metabolism. Its activity is regulated as follows. Inhibited by protonophores (e.g. carbonyl cyanide m-chlorophenyl-hydrazone (CCCP)) and SH group inhibitors (e.g. p-chloromercuribenzene sulphonic acid (PCMBS)). Functionally, responsible in a heterologous system for the transport of sucrose into the cell, with the concomitant uptake of protons (symport system). Can also transport biotin, and probably maltose at a lesser rate. In planta, the role of SUC5 for the transport of sucrose seems to be negligible. Plays a role in the nutrition of the filial tissues during early seed development and is probably involved in the import of biotin into the endosperm and the embryo epidermis. This is Sucrose transport protein SUC5 from Arabidopsis thaliana (Mouse-ear cress).